Here is a 427-residue protein sequence, read N- to C-terminus: MLDIKWIRENAEVLDAALAKRGAEPLSQGLIALDEKRRSIIQSVQDMQSRRNAASKEIGAAMAQKNTELAEKLKGEVADIKTSLPAAEEEERVLTAELNDALSRIPNIPLDDVPVGKDEHDNVVKHSWGAKPAWNHKPKEHYEIGEELGYMDFERAAKLSGSRFTVLTSQLARLERALGQFMLDLHTSEHGYTEVSSPLMVRDEAMFGTGQLPKFAEDSFRTTGGHWLIPTAEVTLTNLVSGDILDQEKLPLRFTALTPSFRSEAGSAGRDTRGMLRQHQFWKCELVSITDAESSIAEHERMTACAEEVLKRLGLHYRVMTLSTGDMGFGARKTYDLEVWLPGQDTYREISSCSVCGDFQARRMNARYRGKDDKGTKFVHTLNGSGTAVGRCLIAVLENYLNDDGSVTVPDALLPYMGGLKRIERAA.

231–233 (TAE) serves as a coordination point for L-serine. 262–264 (RSE) is an ATP binding site. Glu-285 provides a ligand contact to L-serine. Position 349-352 (349-352 (EISS)) interacts with ATP. Residue Ser-385 participates in L-serine binding.

The protein belongs to the class-II aminoacyl-tRNA synthetase family. Type-1 seryl-tRNA synthetase subfamily. As to quaternary structure, homodimer. The tRNA molecule binds across the dimer.

It is found in the cytoplasm. The catalysed reaction is tRNA(Ser) + L-serine + ATP = L-seryl-tRNA(Ser) + AMP + diphosphate + H(+). It catalyses the reaction tRNA(Sec) + L-serine + ATP = L-seryl-tRNA(Sec) + AMP + diphosphate + H(+). It functions in the pathway aminoacyl-tRNA biosynthesis; selenocysteinyl-tRNA(Sec) biosynthesis; L-seryl-tRNA(Sec) from L-serine and tRNA(Sec): step 1/1. Its function is as follows. Catalyzes the attachment of serine to tRNA(Ser). Is also able to aminoacylate tRNA(Sec) with serine, to form the misacylated tRNA L-seryl-tRNA(Sec), which will be further converted into selenocysteinyl-tRNA(Sec). The protein is Serine--tRNA ligase of Rhizobium rhizogenes (strain K84 / ATCC BAA-868) (Agrobacterium radiobacter).